A 226-amino-acid polypeptide reads, in one-letter code: 7-cyano-7-deazaguanine synthase (226 aa).

Residue 8 to 18 (LSGGLDSTTVL) coordinates ATP. Zn(2+) is bound by residues Cys-190, Cys-198, Cys-201, and Cys-204.

The protein belongs to the QueC family. As to quaternary structure, homodimer. Zn(2+) serves as cofactor.

The catalysed reaction is 7-carboxy-7-deazaguanine + NH4(+) + ATP = 7-cyano-7-deazaguanine + ADP + phosphate + H2O + H(+). The protein operates within purine metabolism; 7-cyano-7-deazaguanine biosynthesis. Functionally, catalyzes the ATP-dependent conversion of 7-carboxy-7-deazaguanine (CDG) to 7-cyano-7-deazaguanine (preQ(0)). This chain is 7-cyano-7-deazaguanine synthase, found in Clostridium kluyveri (strain ATCC 8527 / DSM 555 / NBRC 12016 / NCIMB 10680 / K1).